A 258-amino-acid chain; its full sequence is Large ribosomal subunit protein bL19m (258 aa).

The tract at residues 235–258 (SKGLTGGVGGGGGKQKGQESKKKN) is disordered. The segment covering 238–249 (LTGGVGGGGGKQ) has biased composition (gly residues).

Belongs to the bacterial ribosomal protein bL19 family. In terms of assembly, component of the mitochondrial large ribosomal subunit (mt-LSU). Mature N.crassa 74S mitochondrial ribosomes consist of a small (37S) and a large (54S) subunit. The 37S small subunit contains a 16S ribosomal RNA (16S mt-rRNA) and 32 different proteins. The 54S large subunit contains a 23S rRNA (23S mt-rRNA) and 42 different proteins.

It localises to the mitochondrion. Its function is as follows. Component of the mitochondrial ribosome (mitoribosome), a dedicated translation machinery responsible for the synthesis of mitochondrial genome-encoded proteins, including at least some of the essential transmembrane subunits of the mitochondrial respiratory chain. The mitoribosomes are attached to the mitochondrial inner membrane and translation products are cotranslationally integrated into the membrane. This Neurospora crassa (strain ATCC 24698 / 74-OR23-1A / CBS 708.71 / DSM 1257 / FGSC 987) protein is Large ribosomal subunit protein bL19m (img1).